We begin with the raw amino-acid sequence, 465 residues long: Gamma-aminobutyric acid receptor subunit gamma-1 (465 aa).

The first 20 residues, 1 to 20 (MGSGKAFLFSPSLLWSQTRG), serve as a signal peptide directing secretion. Over 21–273 (VRLIFLLLTL…FDLSRRMGYF (253 aa)) the chain is Extracellular. Residues Asn50 and Asn127 are each glycosylated (N-linked (GlcNAc...) asparagine). Cys188 and Cys202 form a disulfide bridge. A glycan (N-linked (GlcNAc...) asparagine) is linked at Asn245. Residues 274–294 (TIQTYIPCILTVVLSWVSFWI) form a helical membrane-spanning segment. At 295–300 (NKDAVP) the chain is on the cytoplasmic side. The chain crosses the membrane as a helical span at residues 301–320 (ARTSLGITTVLTMTTLSTIA). At 321-328 (RKSLPKVS) the chain is on the extracellular side. The chain crosses the membrane as a helical span at residues 329–349 (YVTAMDLFVSVCFIFVFAALM). Topologically, residues 350 to 444 (EYGTLHYFTS…RIAKIDSYSR (95 aa)) are cytoplasmic. The helical transmembrane segment at 445 to 465 (IFFPTAFALFNLVYWVGYLYL) threads the bilayer.

Belongs to the ligand-gated ion channel (TC 1.A.9) family. Gamma-aminobutyric acid receptor (TC 1.A.9.5) subfamily. GABRG1 sub-subfamily. As to quaternary structure, heteropentamer, formed by a combination of alpha (GABRA1-6), beta (GABRB1-3), gamma (GABRG1-3), delta (GABRD), epsilon (GABRE), rho (GABRR1-3), pi (GABRP) and theta (GABRQ) chains, each subunit exhibiting distinct physiological and pharmacological properties. May be palmitoylated. In terms of tissue distribution, expressed in brain.

Its subcellular location is the postsynaptic cell membrane. It localises to the cell membrane. The catalysed reaction is chloride(in) = chloride(out). Functionally, gamma subunit of the heteropentameric ligand-gated chloride channel gated by gamma-aminobutyric acid (GABA), a major inhibitory neurotransmitter in the brain. GABA-gated chloride channels, also named GABA(A) receptors (GABAAR), consist of five subunits arranged around a central pore and contain GABA active binding site(s) located at the alpha and beta subunit interface(s). When activated by GABA, GABAARs selectively allow the flow of chloride anions across the cell membrane down their electrochemical gradient. Chloride influx into the postsynaptic neuron following GABAAR opening decreases the neuron ability to generate a new action potential, thereby reducing nerve transmission. The protein is Gamma-aminobutyric acid receptor subunit gamma-1 of Mus musculus (Mouse).